Reading from the N-terminus, the 217-residue chain is Protein LURP-one-related 2 (217 aa).

This sequence belongs to the LOR family.

Might be related to the phospholipid scramblase and tubby-like superfamily of membrane tethered transcription factors. The chain is Protein LURP-one-related 2 from Arabidopsis thaliana (Mouse-ear cress).